The sequence spans 327 residues: Zinc finger C2HC domain-containing protein 1A (327 aa).

The C2HC/C3H-type 1 zinc-finger motif lies at 13–42 (ELVPCKICGRSFFPKVLKKHVPICQKTAAK). Residues Cys17, Cys20, His32, and Cys36 each coordinate Zn(2+). Disordered stretches follow at residues 40-96 (AAKR…KHEE) and 108-131 (NQVIKDGGPLPPPPPPSYDPDYIQ). The span at 46–56 (VFDSGRQRAEG) shows a compositional bias: basic and acidic residues. Residues 63 to 76 (KPIKPKLQSSSSSS) are compositionally biased toward low complexity. The segment covering 116 to 125 (PLPPPPPPSY) has biased composition (pro residues). A C2HC/C3H-type 2 zinc finger spans residues 128–157 (DYIQCPYCQRRFGENAADRHIKFCKEQASR). Zn(2+) contacts are provided by Cys132, Cys135, His147, and Cys151. The disordered stretch occupies residues 154-271 (QASRISNKSK…NPSTGIGMNK (118 aa)). Positions 187 to 199 (NSPTASSVSSRLP) are enriched in polar residues. Positions 211–229 (GIPSSKPSSTGSIKSTPSG) are enriched in low complexity. 2 stretches are compositionally biased toward polar residues: residues 233 to 245 (LRNNSSSLTSPPS) and 255 to 267 (VSQSSLRNPSTGI).

This sequence belongs to the ZC2HC1 family. The cofactor is Zn(2+).

This is Zinc finger C2HC domain-containing protein 1A (zc2hc1a) from Danio rerio (Zebrafish).